Reading from the N-terminus, the 480-residue chain is Aspartyl/glutamyl-tRNA(Asn/Gln) amidotransferase subunit B (480 aa).

This sequence belongs to the GatB/GatE family. GatB subfamily. In terms of assembly, heterotrimer of A, B and C subunits.

It carries out the reaction L-glutamyl-tRNA(Gln) + L-glutamine + ATP + H2O = L-glutaminyl-tRNA(Gln) + L-glutamate + ADP + phosphate + H(+). The enzyme catalyses L-aspartyl-tRNA(Asn) + L-glutamine + ATP + H2O = L-asparaginyl-tRNA(Asn) + L-glutamate + ADP + phosphate + 2 H(+). Functionally, allows the formation of correctly charged Asn-tRNA(Asn) or Gln-tRNA(Gln) through the transamidation of misacylated Asp-tRNA(Asn) or Glu-tRNA(Gln) in organisms which lack either or both of asparaginyl-tRNA or glutaminyl-tRNA synthetases. The reaction takes place in the presence of glutamine and ATP through an activated phospho-Asp-tRNA(Asn) or phospho-Glu-tRNA(Gln). This chain is Aspartyl/glutamyl-tRNA(Asn/Gln) amidotransferase subunit B, found in Streptococcus agalactiae serotype III (strain NEM316).